Consider the following 401-residue polypeptide: Deubiquitinase and deneddylase Dub1 (401 aa).

Residues 1–11 are compositionally biased toward polar residues; sequence MLSPTNSTSKT. The interval 1–24 is disordered; the sequence is MLSPTNSTSKTAPVPPRDSSKPVL. A helical membrane pass occupies residues 40 to 60; that stretch reads TALAVLLVVVTLGLILLFYSF. A disordered region spans residues 77-130; sequence KEQPTISIPVPLPSPPLAVPRPSTPPPPVISRPSTPSAPKPSTPPPLLPKAPKP. The span at 86 to 128 shows a compositional bias: pro residues; the sequence is VPLPSPPLAVPRPSTPPPPVISRPSTPSAPKPSTPPPLLPKAP. Active-site residues include H275, D292, and C345.

It belongs to the peptidase C48 family. In terms of assembly, binds to host NFKBIA.

It localises to the secreted. Its subcellular location is the host cell. The protein localises to the membrane. In terms of biological role, effector proteins function to alter host cell physiology and promote bacterial survival in host tissues. This protease possesses deubiquitinating and deneddylating activities. Impairs ubiquitination and degradation of NF-kappa-B inhibitor alpha (NFKBIA), thereby preventing NF-kappa-B activation. The protein is Deubiquitinase and deneddylase Dub1 (cdu1) of Chlamydia trachomatis serovar L2 (strain ATCC VR-902B / DSM 19102 / 434/Bu).